Here is a 352-residue protein sequence, read N- to C-terminus: MQRYPTKQIKIRDVLIGGDAPISVQSMTFSKTKDVKGTLEQIQRLYFAGCDIVRCAVFDKEDASALKQIVAGSPIPVVADIHFNHTYALIVSEFVDAIRINPGNIGSAKNIKAVVDACKQRNLPIRIGVNSGSLEKRFEDRYGRTVEAMVESALYNIKLLEDFDFTDIKISLKSSDVERTMQAYRALRPKTNYPFHLGVTEAGTAFHATIKSAIALGGLLLEGIGDTMRVSITGELEEEIKVAKAILKDSGRQKEGLNIISCPTCGRLQADLMAAVKLVEEKTKDIKEPLNVSVMGCVVNAIGEAKGADVAIAFGKGNGMIMRHGEVVARLPESELVDRFLQEIDDEIKSRG.

[4Fe-4S] cluster contacts are provided by C262, C265, C297, and E304.

It belongs to the IspG family. The cofactor is [4Fe-4S] cluster.

It catalyses the reaction (2E)-4-hydroxy-3-methylbut-2-enyl diphosphate + oxidized [flavodoxin] + H2O + 2 H(+) = 2-C-methyl-D-erythritol 2,4-cyclic diphosphate + reduced [flavodoxin]. The protein operates within isoprenoid biosynthesis; isopentenyl diphosphate biosynthesis via DXP pathway; isopentenyl diphosphate from 1-deoxy-D-xylulose 5-phosphate: step 5/6. Functionally, converts 2C-methyl-D-erythritol 2,4-cyclodiphosphate (ME-2,4cPP) into 1-hydroxy-2-methyl-2-(E)-butenyl 4-diphosphate. The sequence is that of 4-hydroxy-3-methylbut-2-en-1-yl diphosphate synthase (flavodoxin) from Campylobacter concisus (strain 13826).